A 1500-amino-acid chain; its full sequence is Copper-transporting ATPase 1 (1500 aa).

Residues 1–653 are Cytoplasmic-facing; sequence MDPSMGVNSV…KREIRQWRRS (653 aa). 2 consecutive HMA domains span residues 8–74 and 85–151; these read NSVT…FDAV and TDTL…LDTG. Cu(+) is bound by residues threonine 18, cysteine 19, and cysteine 22. Threonine 152 carries the phosphothreonine modification. One can recognise an HMA 3 domain in the interval 171 to 237; the sequence is VVLKMKVEGM…QIEAMGFPAF (67 aa). Cu(+) is bound by residues cysteine 182 and cysteine 185. Residue serine 270 is modified to Phosphoserine. The HMA 4 domain occupies 277–343; sequence STATFIIDGM…AIEAVSPGLY (67 aa). Cysteine 288 and cysteine 291 together coordinate Cu(+). Threonine 327 is subject to Phosphothreonine. Serine 339, serine 353, serine 357, and serine 362 each carry phosphoserine. HMA domains are found at residues 377-443, 488-554, and 564-630; these read QETV…FDAT, SKCY…FGAT, and GVLE…FEAS. Cu(+) contacts are provided by cysteine 388, cysteine 391, cysteine 499, cysteine 502, cysteine 575, and cysteine 578. Residues 654–675 traverse the membrane as a helical segment; the sequence is FLVSLFFCIPVMGLMIYMMVMD. The Extracellular segment spans residues 676-714; sequence HHFATLHHNQNMSKEEMINLHSSMFLERQILPGLSVMNL. Asparagine 686 is a glycosylation site (N-linked (GlcNAc...) asparagine). The chain crosses the membrane as a helical span at residues 715–734; it reads LSFLLCVPVQFFGGWYFYIQ. At 735–741 the chain is on the cytoplasmic side; it reads AYKALKH. The chain crosses the membrane as a helical span at residues 742–762; sequence KTANMDVLIVLATTIAFAYSL. Residues 763–781 are Extracellular-facing; that stretch reads IILLVAMYERAKVNPITFF. The chain crosses the membrane as a helical span at residues 782 to 802; sequence DTPPMLFVFIALGRWLEHIAK. Residues 803–936 lie on the Cytoplasmic side of the membrane; that stretch reads GKTSEALAKL…KAPIQQFADK (134 aa). The chain crosses the membrane as a helical span at residues 937–959; the sequence is LSGYFVPFIVFVSIATLLVWIVI. At 960-989 the chain is on the extracellular side; sequence GFLNFEIVETYFPGYNRSISRTETIIRFAF. Residue asparagine 975 is glycosylated (N-linked (GlcNAc...) asparagine). The helical transmembrane segment at 990–1011 threads the bilayer; the sequence is QASITVLCIACPCSLGLATPTA. Over 1012 to 1356 the chain is Cytoplasmic; sequence VMVGTGVGAQ…LSRKTVKRIR (345 aa). The active-site 4-aspartylphosphate intermediate is aspartate 1044. Residue glutamate 1081 participates in ATP binding. At threonine 1212 the chain carries Phosphothreonine. The Mg(2+) site is built by aspartate 1301 and aspartate 1305. A helical membrane pass occupies residues 1357-1374; that stretch reads INFVFALIYNLVGIPIAA. The Extracellular portion of the chain corresponds to 1375–1385; sequence GVFMPIGLVLQ. Residues 1386–1405 form a helical membrane-spanning segment; the sequence is PWMGSAAMAASSVSVVLSSL. At 1406-1500 the chain is on the cytoplasmic side; that stretch reads FLKLYRKPTY…DFREDDDTAL (95 aa). 5 positions are modified to phosphoserine: serine 1430, serine 1432, serine 1460, serine 1463, and serine 1466. An Endocytosis signal motif is present at residues 1467-1468; that stretch reads LL. A phosphoserine mark is found at serine 1469, serine 1473, serine 1476, and serine 1486. Positions 1486 to 1500 are PDZD11-binding; that stretch reads SLLVGDFREDDDTAL. An Endocytosis signal motif is present at residues 1487–1488; it reads LL.

It belongs to the cation transport ATPase (P-type) (TC 3.A.3) family. Type IB subfamily. Monomer. Interacts with PDZD11. Interacts with ATOX1 and COMMD1. Interacts with TYRP1. Directly interacts with SOD3; this interaction is copper-dependent and is required for SOD3 activity. As to expression, widely expressed including in heart, brain, lung, muscle, kidney, pancreas, and to a lesser extent placenta. Expressed in fibroblasts, aortic smooth muscle cells, aortic endothelial cells and umbilical vein endothelial cells (at protein level). In terms of tissue distribution, expressed in cerebellum and brain cortex.

Its subcellular location is the golgi apparatus. It is found in the trans-Golgi network membrane. The protein resides in the cell membrane. It localises to the melanosome membrane. The protein localises to the early endosome membrane. Its subcellular location is the cell projection. It is found in the axon. The protein resides in the dendrite. It localises to the postsynaptic density. The protein localises to the cytoplasm. Its subcellular location is the cytosol. It is found in the endoplasmic reticulum. The catalysed reaction is Cu(+)(in) + ATP + H2O = Cu(+)(out) + ADP + phosphate + H(+). Its function is as follows. ATP-driven copper (Cu(+)) ion pump that plays an important role in intracellular copper ion homeostasis. Within a catalytic cycle, acquires Cu(+) ion from donor protein on the cytoplasmic side of the membrane and delivers it to acceptor protein on the lumenal side. The transfer of Cu(+) ion across the membrane is coupled to ATP hydrolysis and is associated with a transient phosphorylation that shifts the pump conformation from inward-facing to outward-facing state. Under physiological conditions, at low cytosolic copper concentration, it is localized at the trans-Golgi network (TGN) where it transfers Cu(+) ions to cuproenzymes of the secretory pathway. Upon elevated cytosolic copper concentrations, it relocalizes to the plasma membrane where it is responsible for the export of excess Cu(+) ions. May play a dual role in neuron function and survival by regulating cooper efflux and neuronal transmission at the synapse as well as by supplying Cu(+) ions to enzymes such as PAM, TYR and SOD3. In the melanosomes of pigmented cells, provides copper cofactor to TYR to form an active TYR holoenzyme for melanin biosynthesis. This is Copper-transporting ATPase 1 from Homo sapiens (Human).